Here is a 284-residue protein sequence, read N- to C-terminus: MQNQVIQLGNIEIGNNKPFVLFGGMNVLESRDMAMQVCEKYVEVTQKLGVPYIFKASFDKANRSSIHSYRGPGMEEGLKIFQELKETFGVKVITDVHEIYQCRPVAEVVDIIQLPAFLARQTDLVEAMARTGAVINVKKPQFLSPGQIGNIVEKIAECGNNKVILCDRGTNFGYDNLVVDMLGFNIMKKVSQGCPVIFDVTHSLQCRDPFGAASGGRRDQVTELARSGMAIGLAGLFLESHPNPNQAKCDGPSALPLSKLEPFVAQMKAIDDLVKSFEEIDTSN.

This sequence belongs to the KdsA family.

It is found in the cytoplasm. The catalysed reaction is D-arabinose 5-phosphate + phosphoenolpyruvate + H2O = 3-deoxy-alpha-D-manno-2-octulosonate-8-phosphate + phosphate. It functions in the pathway carbohydrate biosynthesis; 3-deoxy-D-manno-octulosonate biosynthesis; 3-deoxy-D-manno-octulosonate from D-ribulose 5-phosphate: step 2/3. It participates in bacterial outer membrane biogenesis; lipopolysaccharide biosynthesis. This chain is 2-dehydro-3-deoxyphosphooctonate aldolase, found in Histophilus somni (strain 2336) (Haemophilus somnus).